The sequence spans 634 residues: 1-phosphatidylinositol 4,5-bisphosphate phosphodiesterase zeta-1 (634 aa).

The region spanning Cys35–Arg70 is the EF-hand domain. The 145-residue stretch at Gln155–Lys299 folds into the PI-PLC X-box domain. Residues His170 and His215 contribute to the active site. Positions Gly312 to Asp345 are disordered. Residues Glu321–Gly334 are compositionally biased toward acidic residues. Residues Leu376–Arg492 enclose the PI-PLC Y-box domain. The C2 domain maps to Arg492 to Ser615.

As to quaternary structure, interacts (via its C2 domain) with PtdIns(3)P and, to a lesser extent, PtdIns(5)P in vitro. Requires Ca(2+) as cofactor.

It is found in the nucleus. The protein resides in the cytoplasm. Its subcellular location is the perinuclear region. It carries out the reaction a 1,2-diacyl-sn-glycero-3-phospho-(1D-myo-inositol-4,5-bisphosphate) + H2O = 1D-myo-inositol 1,4,5-trisphosphate + a 1,2-diacyl-sn-glycerol + H(+). In terms of biological role, the production of the second messenger molecules diacylglycerol (DAG) and inositol 1,4,5-trisphosphate (IP3) is mediated by activated phosphatidylinositol-specific phospholipase C enzymes. In vitro, hydrolyzes PtdIns(4,5)P2 in a Ca(2+)-dependent manner. Triggers intracellular Ca(2+) oscillations in oocytes solely during M phase and is involved in inducing oocyte activation and initiating embryonic development up to the blastocyst stage. Is therefore a strong candidate for the egg-activating soluble sperm factor that is transferred from the sperm into the egg cytoplasm following gamete membrane fusion. May exert an inhibitory effect on phospholipase-C-coupled processes that depend on calcium ions and protein kinase C, including CFTR trafficking and function. The chain is 1-phosphatidylinositol 4,5-bisphosphate phosphodiesterase zeta-1 from Bos taurus (Bovine).